The sequence spans 103 residues: Putative glutaredoxin-C14 (103 aa).

In terms of domain architecture, Glutaredoxin spans methionine 1 to tryptophan 102. Cysteines 21 and 24 form a disulfide. Residues alanine 100–leucine 103 carry the Responsive for interaction with TGA factors motif.

Belongs to the glutaredoxin family. CC-type subfamily.

It localises to the cytoplasm. Its subcellular location is the nucleus. Its function is as follows. Has a glutathione-disulfide oxidoreductase activity in the presence of NADPH and glutathione reductase. Reduces low molecular weight disulfides and proteins. This is Putative glutaredoxin-C14 (GRXC14) from Oryza sativa subsp. japonica (Rice).